Here is a 142-residue protein sequence, read N- to C-terminus: Small ribosomal subunit protein bS6 (142 aa).

The disordered stretch occupies residues N110–E142.

Belongs to the bacterial ribosomal protein bS6 family.

Binds together with bS18 to 16S ribosomal RNA. The polypeptide is Small ribosomal subunit protein bS6 (Helicobacter pylori (strain G27)).